Consider the following 358-residue polypeptide: 3-dehydroquinate synthase (358 aa).

NAD(+) contacts are provided by residues 70 to 75 (DGEQFK), 104 to 108 (GVIGD), 128 to 129 (TT), Lys-141, Lys-150, and 168 to 171 (CLHT). The Zn(2+) site is built by Glu-183, His-246, and His-263.

This sequence belongs to the sugar phosphate cyclases superfamily. Dehydroquinate synthase family. It depends on Co(2+) as a cofactor. Zn(2+) is required as a cofactor. The cofactor is NAD(+).

It localises to the cytoplasm. It carries out the reaction 7-phospho-2-dehydro-3-deoxy-D-arabino-heptonate = 3-dehydroquinate + phosphate. Its pathway is metabolic intermediate biosynthesis; chorismate biosynthesis; chorismate from D-erythrose 4-phosphate and phosphoenolpyruvate: step 2/7. In terms of biological role, catalyzes the conversion of 3-deoxy-D-arabino-heptulosonate 7-phosphate (DAHP) to dehydroquinate (DHQ). The polypeptide is 3-dehydroquinate synthase (Shewanella baltica (strain OS195)).